Here is a 206-residue protein sequence, read N- to C-terminus: Holliday junction resolvase RecU (206 aa).

Residues 1–34 (MIRYPNGKTFQPKHSVSSQNSQKRAPSYSNRGMT) form a disordered region. The span at 8-32 (KTFQPKHSVSSQNSQKRAPSYSNRG) shows a compositional bias: polar residues. Mg(2+) is bound by residues T86, D88, E101, and Q120.

It belongs to the RecU family. In terms of assembly, homodimer. Interacts with RuvB. Mg(2+) is required as a cofactor.

Its subcellular location is the cytoplasm. The catalysed reaction is Endonucleolytic cleavage at a junction such as a reciprocal single-stranded crossover between two homologous DNA duplexes (Holliday junction).. Its function is as follows. Has at least 2 separable functions; Holliday junction resolution with generation of monomeric chromosomes, and negative modulation of RecA activity. Endonuclease that resolves Holliday junction intermediates in genetic recombination. Cleaves mobile four-strand junctions by introducing symmetrical nicks in paired strands. Promotes annealing of linear ssDNA with homologous dsDNA. Required for DNA repair, homologous recombination and chromosome segregation. Partially inhibits the hydrolysis of dATP or rATP by RecA. Holliday junction resolution is stimulated by RuvB. In Bacillus subtilis (strain 168), this protein is Holliday junction resolvase RecU (recU).